A 658-amino-acid chain; its full sequence is NUAK family SNF1-like kinase 1 (658 aa).

Methionine 1 is subject to N-acetylmethionine. The disordered stretch occupies residues 1–53; that stretch reads MEGAAVSAAGDGPAVETGLPGSPLEAVAGATAAPVEPRKPHGVKRHHHKHNLK. Residue serine 22 is modified to Phosphoserine. Residues 40 to 53 show a composition bias toward basic residues; it reads PHGVKRHHHKHNLK. The Protein kinase domain occupies 56-307; that stretch reads YELQETLGKG…IEDIANHWWV (252 aa). Residues 62 to 70 and lysine 85 each bind ATP; that span reads LGKGTYGKV. The Proton acceptor role is filled by aspartate 179. Threonine 212 is subject to Phosphothreonine; by LKB1. Disordered regions lie at residues 353–422 and 441–568; these read LAKP…EGIV and IPLP…SYSR. Residues 378–393 show a composition bias toward polar residues; the sequence is FPQSGQDSVPESPSKL. Residues 394–405 are compositionally biased toward basic residues; it reads SSKRPKGILKKR. The short motif at 400 to 403 is the GILK motif element; that stretch reads GILK. Serine 456 bears the Phosphoserine mark. Basic residues predominate over residues 519–530; that stretch reads SCRRKGILKHSS. Low complexity predominate over residues 559–568; it reads SDGISRSYSR. At serine 601 the chain carries Phosphoserine; by PKB/AKT1.

The protein belongs to the protein kinase superfamily. CAMK Ser/Thr protein kinase family. SNF1 subfamily. In terms of assembly, interacts (via GILK motif) with PPP1CB; the interaction is direct and bridges NUAK1 and PPP1R12A. Interacts with CDKN1A. Requires Mg(2+) as cofactor. Post-translationally, phosphorylated at Thr-212 by STK11/LKB1 in complex with STE20-related adapter-alpha (STRADA) pseudo kinase and CAB39. Not dephosphorylated by the myosin PP1 complex when regulating its activity, due to the presence of PPP1R12A, which prevents myosin PP1 from dephosphorylating NUAK1. Phosphorylated by STK38L upon stimulation with IGF1. Ubiquitinated with 'Lys-29'- and 'Lys-33'-linked polyubiquitins which appear to impede LKB1-mediated phosphorylation. Deubiquitinated by USP9X. As to expression, expressed in the developing central nervous system, in epidermis, and some other tissues.

Its subcellular location is the nucleus. The protein resides in the cytoplasm. The enzyme catalyses L-seryl-[protein] + ATP = O-phospho-L-seryl-[protein] + ADP + H(+). It catalyses the reaction L-threonyl-[protein] + ATP = O-phospho-L-threonyl-[protein] + ADP + H(+). With respect to regulation, activated by phosphorylation on Thr-212. Activated by phosphorylation at Ser-601 AKT1 during glucose starvation; the relevance of such activation in normal cells is however unsure. Serine/threonine-protein kinase involved in various processes such as cell adhesion, regulation of cell ploidy and senescence, cell proliferation and tumor progression. Phosphorylates ATM, CASP6, LATS1, PPP1R12A and p53/TP53. Acts as a regulator of cellular senescence and cellular ploidy by mediating phosphorylation of 'Ser-464' of LATS1, thereby controlling its stability. Controls cell adhesion by regulating activity of the myosin protein phosphatase 1 (PP1) complex. Acts by mediating phosphorylation of PPP1R12A subunit of myosin PP1: phosphorylated PPP1R12A then interacts with 14-3-3, leading to reduced dephosphorylation of myosin MLC2 by myosin PP1. May be involved in DNA damage response: phosphorylates p53/TP53 at 'Ser-15' and 'Ser-392' and is recruited to the CDKN1A/WAF1 promoter to participate in transcription activation by p53/TP53. May also act as a tumor malignancy-associated factor by promoting tumor invasion and metastasis under regulation and phosphorylation by AKT1. Suppresses Fas-induced apoptosis by mediating phosphorylation of CASP6, thereby suppressing the activation of the caspase and the subsequent cleavage of CFLAR. Regulates UV radiation-induced DNA damage response mediated by CDKN1A. In association with STK11, phosphorylates CDKN1A in response to UV radiation and contributes to its degradation which is necessary for optimal DNA repair. The chain is NUAK family SNF1-like kinase 1 (Nuak1) from Mus musculus (Mouse).